Here is a 288-residue protein sequence, read N- to C-terminus: 4-diphosphocytidyl-2-C-methyl-D-erythritol kinase (288 aa).

Residue lysine 8 is part of the active site. Residue 90–100 (PVGAGLAGGSS) coordinates ATP. Aspartate 132 is a catalytic residue.

The protein belongs to the GHMP kinase family. IspE subfamily.

It catalyses the reaction 4-CDP-2-C-methyl-D-erythritol + ATP = 4-CDP-2-C-methyl-D-erythritol 2-phosphate + ADP + H(+). It functions in the pathway isoprenoid biosynthesis; isopentenyl diphosphate biosynthesis via DXP pathway; isopentenyl diphosphate from 1-deoxy-D-xylulose 5-phosphate: step 3/6. In terms of biological role, catalyzes the phosphorylation of the position 2 hydroxy group of 4-diphosphocytidyl-2C-methyl-D-erythritol. This chain is 4-diphosphocytidyl-2-C-methyl-D-erythritol kinase, found in Chlamydia trachomatis serovar L2b (strain UCH-1/proctitis).